Here is a 743-residue protein sequence, read N- to C-terminus: Phosphoribosylformylglycinamidine synthase subunit PurL (743 aa).

His50 is a catalytic residue. Tyr53 and Lys92 together coordinate ATP. Residue Glu94 coordinates Mg(2+). Substrate contacts are provided by residues 95-98 and Arg117; that span reads SHNH. The active-site Proton acceptor is the His96. Asp118 lines the Mg(2+) pocket. Gln241 provides a ligand contact to substrate. Asp269 lines the Mg(2+) pocket. 313–315 serves as a coordination point for substrate; sequence ESQ. Asp495 and Gly532 together coordinate ATP. Asn533 contributes to the Mg(2+) binding site. A substrate-binding site is contributed by Ser535.

Belongs to the FGAMS family. As to quaternary structure, monomer. Part of the FGAM synthase complex composed of 1 PurL, 1 PurQ and 2 PurS subunits.

The protein localises to the cytoplasm. It carries out the reaction N(2)-formyl-N(1)-(5-phospho-beta-D-ribosyl)glycinamide + L-glutamine + ATP + H2O = 2-formamido-N(1)-(5-O-phospho-beta-D-ribosyl)acetamidine + L-glutamate + ADP + phosphate + H(+). Its pathway is purine metabolism; IMP biosynthesis via de novo pathway; 5-amino-1-(5-phospho-D-ribosyl)imidazole from N(2)-formyl-N(1)-(5-phospho-D-ribosyl)glycinamide: step 1/2. Functionally, part of the phosphoribosylformylglycinamidine synthase complex involved in the purines biosynthetic pathway. Catalyzes the ATP-dependent conversion of formylglycinamide ribonucleotide (FGAR) and glutamine to yield formylglycinamidine ribonucleotide (FGAM) and glutamate. The FGAM synthase complex is composed of three subunits. PurQ produces an ammonia molecule by converting glutamine to glutamate. PurL transfers the ammonia molecule to FGAR to form FGAM in an ATP-dependent manner. PurS interacts with PurQ and PurL and is thought to assist in the transfer of the ammonia molecule from PurQ to PurL. The protein is Phosphoribosylformylglycinamidine synthase subunit PurL of Rhizobium leguminosarum bv. trifolii (strain WSM2304).